A 165-amino-acid polypeptide reads, in one-letter code: Large ribosomal subunit protein uL10 (165 aa).

This sequence belongs to the universal ribosomal protein uL10 family. Part of the ribosomal stalk of the 50S ribosomal subunit. The N-terminus interacts with L11 and the large rRNA to form the base of the stalk. The C-terminus forms an elongated spine to which L12 dimers bind in a sequential fashion forming a multimeric L10(L12)X complex.

In terms of biological role, forms part of the ribosomal stalk, playing a central role in the interaction of the ribosome with GTP-bound translation factors. The chain is Large ribosomal subunit protein uL10 from Salmonella agona (strain SL483).